The following is a 1268-amino-acid chain: Protein transport protein Sec24B (1268 aa).

2 stretches are compositionally biased toward low complexity: residues 1 to 14 (MSAP…AASA) and 21 to 48 (GGAA…GPAQ). 4 disordered regions span residues 1-71 (MSAP…SGHY), 216-263 (APTV…LTWS), 303-345 (QNVQ…SVTQ), and 362-451 (NNQA…VVPQ). An N-acetylserine modification is found at S2. Residue S55 is modified to Phosphoserine. Over residues 225-234 (NSFSGQNTAI) the composition is skewed to polar residues. 3 stretches are compositionally biased toward low complexity: residues 245–255 (SQQHHQQQSLS), 311–332 (SPVV…TPPT), and 365–375 (ASSAPTPLSST). T329 is subject to Phosphothreonine. Over residues 376–389 (SDDEEEEEEDEEAG) the composition is skewed to acidic residues. The segment covering 426-450 (APDPAPEPDPASAPAPASAPAPVVP) has biased composition (pro residues). Zn(2+) contacts are provided by C605, C608, C626, and C629. The interval 605–629 (CRSCRTYINPFVSFIDQRRWKCNLC) is zinc finger-like. The stretch at 1141–1213 (PQPPLQKLSA…TLSSERARSF (73 aa)) is one Gelsolin-like repeat. S1224 bears the Phosphoserine mark.

The protein belongs to the SEC23/SEC24 family. SEC24 subfamily. COPII is composed of at least five proteins: the Sec23/24 complex, the Sec13/31 complex and SAR1. Interacts with STING1; promoting STING1 translocation to COPII vesicles in a STEEP1-dependent manner. Interacts with RNF139. Interacts with TMED2 and TMED10. Interacts with CNIH4.

The protein localises to the cytoplasmic vesicle. Its subcellular location is the COPII-coated vesicle membrane. The protein resides in the endoplasmic reticulum membrane. It is found in the cytoplasm. It localises to the cytosol. In terms of biological role, component of the coat protein complex II (COPII) which promotes the formation of transport vesicles from the endoplasmic reticulum (ER). The coat has two main functions, the physical deformation of the endoplasmic reticulum membrane into vesicles and the selection of cargo molecules for their transport to the Golgi complex. Plays a central role in cargo selection within the COPII complex and together with SEC24A may have a different specificity compared to SEC24C and SEC24D. May package preferentially cargos with cytoplasmic DxE or LxxLE motifs and may also recognize conformational epitopes. In Homo sapiens (Human), this protein is Protein transport protein Sec24B.